Here is a 187-residue protein sequence, read N- to C-terminus: Large ribosomal subunit protein uL22 (187 aa).

The protein belongs to the universal ribosomal protein uL22 family.

The chain is Large ribosomal subunit protein uL22 (RPL17) from Theileria parva (East coast fever infection agent).